The following is a 247-amino-acid chain: uncharacterized protein (247 aa).

To M.pneumoniae MPN_635 N-terminal region.

This is an uncharacterized protein from Mycoplasma pneumoniae (strain ATCC 29342 / M129 / Subtype 1) (Mycoplasmoides pneumoniae).